The chain runs to 454 residues: Chromosomal replication initiator protein DnaA (454 aa).

The segment at 1–83 (MMTDSMRLVW…RPLKVLLEVA (83 aa)) is domain I, interacts with DnaA modulators. Positions 83–115 (AECVAEAPETPEEAPQQLCLPAFADIPRPSSGR) are domain II. Positions 116–333 (LLNRDFTFDS…SGIKGLAARN (218 aa)) are domain III, AAA+ region. ATP-binding residues include G160, G162, K163, and S164. The domain IV, binds dsDNA stretch occupies residues 334–454 (SIMGRGIDLK…LCGKIEAGEF (121 aa)).

Belongs to the DnaA family. Oligomerizes as a right-handed, spiral filament on DNA at oriC.

The protein localises to the cytoplasm. Its function is as follows. Plays an essential role in the initiation and regulation of chromosomal replication. ATP-DnaA binds to the origin of replication (oriC) to initiate formation of the DNA replication initiation complex once per cell cycle. Binds the DnaA box (a 9 base pair repeat at the origin) and separates the double-stranded (ds)DNA. Forms a right-handed helical filament on oriC DNA; dsDNA binds to the exterior of the filament while single-stranded (ss)DNA is stabiized in the filament's interior. The ATP-DnaA-oriC complex binds and stabilizes one strand of the AT-rich DNA unwinding element (DUE), permitting loading of DNA polymerase. After initiation quickly degrades to an ADP-DnaA complex that is not apt for DNA replication. Binds acidic phospholipids. This is Chromosomal replication initiator protein DnaA from Desulfatibacillum aliphaticivorans.